Reading from the N-terminus, the 286-residue chain is Beta-lactamase SHV-29 (286 aa).

The first 21 residues, 1 to 21, serve as a signal peptide directing secretion; it reads MRYIRLCIISLLATLPLAVHA. S66 acts as the Acyl-ester intermediate in catalysis. C73 and C119 form a disulfide bridge. The active-site Proton acceptor is the E164. 230–232 serves as a coordination point for substrate; sequence KTG.

It belongs to the class-A beta-lactamase family.

The enzyme catalyses a beta-lactam + H2O = a substituted beta-amino acid. This chain is Beta-lactamase SHV-29 (bla), found in Klebsiella pneumoniae.